The following is a 386-amino-acid chain: Galactokinase (386 aa).

Residue 32 to 35 coordinates substrate; sequence EHTD. ATP contacts are provided by residues Ser66 and 123–129; that span reads GASLSSS. Residues Ser129 and Glu161 each contribute to the Mg(2+) site. Asp173 acts as the Proton acceptor in catalysis. Tyr223 is a binding site for substrate.

The protein belongs to the GHMP kinase family. GalK subfamily.

Its subcellular location is the cytoplasm. It catalyses the reaction alpha-D-galactose + ATP = alpha-D-galactose 1-phosphate + ADP + H(+). It functions in the pathway carbohydrate metabolism; galactose metabolism. Catalyzes the transfer of the gamma-phosphate of ATP to D-galactose to form alpha-D-galactose-1-phosphate (Gal-1-P). The protein is Galactokinase of Staphylococcus saprophyticus subsp. saprophyticus (strain ATCC 15305 / DSM 20229 / NCIMB 8711 / NCTC 7292 / S-41).